Consider the following 568-residue polypeptide: DEAD-box ATP-dependent RNA helicase 51 (568 aa).

Basic and acidic residues-rich tracts occupy residues 1–13 (MVESDKSSVEELK) and 23–47 (KKNEQQKAEEKTHTVEENADETQKK). The disordered stretch occupies residues 1 to 70 (MVESDKSSVE…EEEEKVEAME (70 aa)). Residues 13–78 (KKRVRKRSRG…MEDGEDEKNI (66 aa)) adopt a coiled-coil conformation. Residues 60–70 (EEEEEKVEAME) show a composition bias toward acidic residues. The Q motif signature appears at 89–117 (VTFDSLDLSEQTSIAIKEMGFQYMTQIQA). A Helicase ATP-binding domain is found at 120-295 (IQPLLEGKDV…RVSLTSPVHV (176 aa)). Residue 133-140 (ARTGSGKT) participates in ATP binding. The short motif at 243–246 (DEAD) is the DEAD box element. Positions 321–468 (RLILLISFLK…ELEFNEKRLS (148 aa)) constitute a Helicase C-terminal domain. The segment at 540–568 (KVRKARKQQGRNGFSPYSPYGKSTPTKEA) is disordered.

It belongs to the DEAD box helicase family. DDX18/HAS1 subfamily.

It carries out the reaction ATP + H2O = ADP + phosphate + H(+). This Arabidopsis thaliana (Mouse-ear cress) protein is DEAD-box ATP-dependent RNA helicase 51 (RH51).